A 348-amino-acid chain; its full sequence is Uroporphyrinogen decarboxylase (348 aa).

Residues 27–31 (RQAGR), Phe-46, Asp-76, Tyr-152, Ser-207, and His-320 contribute to the substrate site.

The protein belongs to the uroporphyrinogen decarboxylase family. Homodimer.

The protein resides in the cytoplasm. The enzyme catalyses uroporphyrinogen III + 4 H(+) = coproporphyrinogen III + 4 CO2. The protein operates within porphyrin-containing compound metabolism; protoporphyrin-IX biosynthesis; coproporphyrinogen-III from 5-aminolevulinate: step 4/4. Its function is as follows. Catalyzes the decarboxylation of four acetate groups of uroporphyrinogen-III to yield coproporphyrinogen-III. The protein is Uroporphyrinogen decarboxylase of Bacillus thuringiensis (strain Al Hakam).